The sequence spans 315 residues: ATP synthase gamma chain (315 aa).

It belongs to the ATPase gamma chain family. As to quaternary structure, F-type ATPases have 2 components, CF(1) - the catalytic core - and CF(0) - the membrane proton channel. CF(1) has five subunits: alpha(3), beta(3), gamma(1), delta(1), epsilon(1). CF(0) has three main subunits: a, b and c.

Its subcellular location is the cell membrane. Its function is as follows. Produces ATP from ADP in the presence of a proton gradient across the membrane. The gamma chain is believed to be important in regulating ATPase activity and the flow of protons through the CF(0) complex. The chain is ATP synthase gamma chain from Latilactobacillus sakei subsp. sakei (strain 23K) (Lactobacillus sakei subsp. sakei).